The primary structure comprises 241 residues: DNA repair protein RecO (241 aa).

The protein belongs to the RecO family.

Functionally, involved in DNA repair and RecF pathway recombination. This Xanthomonas campestris pv. campestris (strain B100) protein is DNA repair protein RecO.